A 452-amino-acid polypeptide reads, in one-letter code: Ribosomal L1 domain-containing protein 1 (452 aa).

Methionine 1 is subject to N-acetylmethionine. Residues lysine 119 and lysine 253 each participate in a glycyl lysine isopeptide (Lys-Gly) (interchain with G-Cter in SUMO2) cross-link. The stretch at 277 to 350 forms a coiled coil; the sequence is LRSLRKQELK…QKVTEECEEA (74 aa). The tract at residues 283–452 is disordered; it reads QELKKRKREN…DKKTKAAHSN (170 aa). A compositionally biased stretch (basic and acidic residues) spans 292 to 301; the sequence is NAKLKKESKM. The span at 309-319 shows a compositional bias: polar residues; the sequence is ATSLLTQSGLA. Positions 330–341 are enriched in basic residues; that stretch reads QKKKTNKAHKKQ. Phosphothreonine is present on residues threonine 334, threonine 344, threonine 360, threonine 399, and threonine 407. Residues 414–423 show a composition bias toward basic and acidic residues; that stretch reads KDVQEFRKPE. Residues 425–440 are compositionally biased toward polar residues; the sequence is SSFSTPRKSGKKASNT. Threonine 429 bears the Phosphothreonine mark. Lysine 432 carries the N6-acetyllysine modification. Serine 433 is subject to Phosphoserine.

This sequence belongs to the universal ribosomal protein uL1 family. Highly divergent. As to quaternary structure, interacts with ING1. Interacts with KPNA7 and KPNA2.

The protein resides in the nucleus. Its subcellular location is the nucleolus. Regulates cellular senescence through inhibition of PTEN translation. Acts as a pro-apoptotic regulator in response to DNA damage. This is Ribosomal L1 domain-containing protein 1 from Mus musculus (Mouse).